The following is a 640-amino-acid chain: Probable Ufm1-specific protease (640 aa).

Residues Cys467, Asp591, and His593 contribute to the active site.

Belongs to the peptidase C78 family.

Functionally, thiol protease which recognizes and hydrolyzes the peptide bond at the C-terminal Gly of ufm-1, a ubiquitin-like modifier protein bound to a number of target proteins. The protein is Probable Ufm1-specific protease of Oryza sativa subsp. japonica (Rice).